A 147-amino-acid polypeptide reads, in one-letter code: NAD(P)H-quinone oxidoreductase subunit N (147 aa).

Belongs to the complex I NdhN subunit family. As to quaternary structure, NDH-1 can be composed of about 15 different subunits; different subcomplexes with different compositions have been identified which probably have different functions.

The protein localises to the cellular thylakoid membrane. It carries out the reaction a plastoquinone + NADH + (n+1) H(+)(in) = a plastoquinol + NAD(+) + n H(+)(out). The catalysed reaction is a plastoquinone + NADPH + (n+1) H(+)(in) = a plastoquinol + NADP(+) + n H(+)(out). In terms of biological role, NDH-1 shuttles electrons from an unknown electron donor, via FMN and iron-sulfur (Fe-S) centers, to quinones in the respiratory and/or the photosynthetic chain. The immediate electron acceptor for the enzyme in this species is believed to be plastoquinone. Couples the redox reaction to proton translocation, and thus conserves the redox energy in a proton gradient. Cyanobacterial NDH-1 also plays a role in inorganic carbon-concentration. The polypeptide is NAD(P)H-quinone oxidoreductase subunit N (Synechococcus sp. (strain JA-3-3Ab) (Cyanobacteria bacterium Yellowstone A-Prime)).